Reading from the N-terminus, the 919-residue chain is Alpha-amylase (919 aa).

The signal sequence occupies residues Met1–Ala33. Residues Asn182 and Asp281 each contribute to the Ca(2+) site. Residue Asp312 is the Nucleophile of the active site. His316 is a binding site for Ca(2+). Catalysis depends on Glu346, which acts as the Proton donor. Residues Ala704 to Arg729 form a disordered region. A compositionally biased stretch (basic residues) spans Arg707 to Pro724.

It belongs to the glycosyl hydrolase 13 family. In terms of assembly, monomer. The cofactor is Ca(2+).

Its subcellular location is the secreted. The enzyme catalyses Endohydrolysis of (1-&gt;4)-alpha-D-glucosidic linkages in polysaccharides containing three or more (1-&gt;4)-alpha-linked D-glucose units.. The polypeptide is Alpha-amylase (amy) (Streptomyces lividans).